Here is a 170-residue protein sequence, read N- to C-terminus: 3-dehydroquinate dehydratase (170 aa).

The active-site Proton acceptor is the Tyr22. Positions 76, 82, and 89 each coordinate substrate. His102 serves as the catalytic Proton donor. Substrate contacts are provided by residues 103 to 104 (LT) and Arg113.

It belongs to the type-II 3-dehydroquinase family. In terms of assembly, homododecamer.

It catalyses the reaction 3-dehydroquinate = 3-dehydroshikimate + H2O. Its pathway is metabolic intermediate biosynthesis; chorismate biosynthesis; chorismate from D-erythrose 4-phosphate and phosphoenolpyruvate: step 3/7. Its function is as follows. Catalyzes a trans-dehydration via an enolate intermediate. The sequence is that of 3-dehydroquinate dehydratase (aroQ) from Helicobacter pylori (strain J99 / ATCC 700824) (Campylobacter pylori J99).